The chain runs to 187 residues: Orotate phosphoribosyltransferase (187 aa).

Residues R98, K99, K102, H104, and 128–136 (EDVTTTGGS) each bind 5-phospho-alpha-D-ribose 1-diphosphate. Orotate-binding residues include T132 and R160.

The protein belongs to the purine/pyrimidine phosphoribosyltransferase family. PyrE subfamily. As to quaternary structure, homodimer. Requires Mg(2+) as cofactor.

The enzyme catalyses orotidine 5'-phosphate + diphosphate = orotate + 5-phospho-alpha-D-ribose 1-diphosphate. The protein operates within pyrimidine metabolism; UMP biosynthesis via de novo pathway; UMP from orotate: step 1/2. Its function is as follows. Catalyzes the transfer of a ribosyl phosphate group from 5-phosphoribose 1-diphosphate to orotate, leading to the formation of orotidine monophosphate (OMP). The protein is Orotate phosphoribosyltransferase of Bradyrhizobium diazoefficiens (strain JCM 10833 / BCRC 13528 / IAM 13628 / NBRC 14792 / USDA 110).